Reading from the N-terminus, the 1040-residue chain is Desmoglein-4 (1040 aa).

Residues Met1–Ser23 form the signal peptide. A propeptide spanning residues Glu24–Arg49 is cleaved from the precursor. Cadherin domains are found at residues Glu50–Phe157, Thr158–Leu269, Glu270–Phe385, and Ser389–Ile497. Topologically, residues Glu50–Ala633 are extracellular. Asn110 is a glycosylation site (N-linked (GlcNAc...) asparagine). Asn545 carries N-linked (GlcNAc...) asparagine glycosylation. The chain crosses the membrane as a helical span at residues Gly634–Met654. Over Cys655–Gln1040 the chain is Cytoplasmic. 2 Desmoglein repeat repeats span residues Thr883–Glu909 and Thr910–Met940. The interval Gln1015–Gln1040 is disordered.

As to quaternary structure, interacts with JUP.

It is found in the cell membrane. The protein resides in the cell junction. It localises to the desmosome. Functionally, a component of desmosome cell-cell junctions which are required for positive regulation of cellular adhesion. Coordinates the transition from proliferation to differentiation in hair follicle keratinocytes. Plays a role in moderating lymphocyte migration to inflamed skin and maintaining homeostasis of the epidermal inflammatory response. The protein is Desmoglein-4 (Dsg4) of Rattus norvegicus (Rat).